A 240-amino-acid polypeptide reads, in one-letter code: Small ribosomal subunit protein uS3 (240 aa).

Residues 39 to 109 (IRQYIEKTLN…QIRVNVIEVP (71 aa)) enclose the KH type-2 domain. Residues 219 to 240 (APPSQPRRKSRRQQFDDRSQDG) are disordered. Residues 231–240 (QQFDDRSQDG) show a composition bias toward basic and acidic residues.

It belongs to the universal ribosomal protein uS3 family. Part of the 30S ribosomal subunit. Forms a tight complex with proteins S10 and S14.

Binds the lower part of the 30S subunit head. Binds mRNA in the 70S ribosome, positioning it for translation. This Synechocystis sp. (strain ATCC 27184 / PCC 6803 / Kazusa) protein is Small ribosomal subunit protein uS3.